Here is an 85-residue protein sequence, read N- to C-terminus: MAHKKAGGSTRNGRDSEAKRLGVKMYGGQVIKAGNIIVRQRGTQFHAGYGVGMGKDHTLFAKIEGVIKFEVKGAFGRRYVSVVAA.

Belongs to the bacterial ribosomal protein bL27 family.

The sequence is that of Large ribosomal subunit protein bL27 from Pseudomonas fluorescens (strain ATCC BAA-477 / NRRL B-23932 / Pf-5).